The following is a 115-amino-acid chain: Large ribosomal subunit protein P2 (115 aa).

Met-1 carries the N-acetylmethionine modification. 2 positions are modified to phosphoserine: Ser-17 and Ser-19. Lys-21 carries the N6-acetyllysine; alternate modification. The residue at position 21 (Lys-21) is an N6-succinyllysine; alternate. Residues 76–90 (APGSAAPAAGSAPAA) are compositionally biased toward low complexity. The disordered stretch occupies residues 76–115 (APGSAAPAAGSAPAAAEEKKEEKKEESEESDDDMGFGLFD). Phosphoserine occurs at positions 79 and 86. The span at 91 to 101 (AEEKKEEKKEE) shows a compositional bias: basic and acidic residues. 2 positions are modified to phosphoserine: Ser-102 and Ser-105.

It belongs to the eukaryotic ribosomal protein P1/P2 family. As to quaternary structure, heterodimer with RPLP1 at the lateral ribosomal stalk of the large ribosomal subunit.

In terms of biological role, plays an important role in the elongation step of protein synthesis. This is Large ribosomal subunit protein P2 (RPLP2) from Bos taurus (Bovine).